The primary structure comprises 593 residues: Probable serine/threonine-protein kinase samkB (593 aa).

One can recognise an SAM domain in the interval 29–93 (WNNEAVCEWL…SIFKKLKNNN (65 aa)). Residues 108–157 (ESNSINNSNNNNNNNNNNNNNNNNNNNNNNNNNNNNNNNNNNNNNNKIDT) are disordered. Positions 113 to 153 (NNSNNNNNNNNNNNNNNNNNNNNNNNNNNNNNNNNNNNNNN) are enriched in low complexity. One can recognise a Protein kinase domain in the interval 186 to 438 (YKLIEEIGRG…SKQLLEAQWF (253 aa)). Residues 192–200 (IGRGAFSIV) and Lys216 contribute to the ATP site. Asp313 serves as the catalytic Proton acceptor.

Belongs to the protein kinase superfamily. Ser/Thr protein kinase family.

The catalysed reaction is L-seryl-[protein] + ATP = O-phospho-L-seryl-[protein] + ADP + H(+). It catalyses the reaction L-threonyl-[protein] + ATP = O-phospho-L-threonyl-[protein] + ADP + H(+). This chain is Probable serine/threonine-protein kinase samkB (samkB), found in Dictyostelium discoideum (Social amoeba).